Reading from the N-terminus, the 163-residue chain is Putative MucR family transcriptional regulatory protein RA0938 (163 aa).

It belongs to the ros/MucR family.

This Rhizobium meliloti (strain 1021) (Ensifer meliloti) protein is Putative MucR family transcriptional regulatory protein RA0938.